The chain runs to 81 residues: Photosystem I iron-sulfur center (81 aa).

4Fe-4S ferredoxin-type domains are found at residues 2-31 (SHTVKIYDTCIGCTQCVRACPTDVLEMVPW) and 37-68 (GQIASSPRVEDCVGCKRCETACPTDFLSVRVY). [4Fe-4S] cluster is bound by residues Cys-11, Cys-14, Cys-17, Cys-21, Cys-48, Cys-51, Cys-54, and Cys-58.

As to quaternary structure, the eukaryotic PSI reaction center is composed of at least 11 subunits. Requires [4Fe-4S] cluster as cofactor.

It localises to the plastid. Its subcellular location is the chloroplast thylakoid membrane. It carries out the reaction reduced [plastocyanin] + hnu + oxidized [2Fe-2S]-[ferredoxin] = oxidized [plastocyanin] + reduced [2Fe-2S]-[ferredoxin]. Apoprotein for the two 4Fe-4S centers FA and FB of photosystem I (PSI); essential for photochemical activity. FB is the terminal electron acceptor of PSI, donating electrons to ferredoxin. The C-terminus interacts with PsaA/B/D and helps assemble the protein into the PSI complex. Required for binding of PsaD and PsaE to PSI. PSI is a plastocyanin/cytochrome c6-ferredoxin oxidoreductase, converting photonic excitation into a charge separation, which transfers an electron from the donor P700 chlorophyll pair to the spectroscopically characterized acceptors A0, A1, FX, FA and FB in turn. The sequence is that of Photosystem I iron-sulfur center from Thalassiosira pseudonana (Marine diatom).